The primary structure comprises 336 residues: tRNA N6-adenosine threonylcarbamoyltransferase (336 aa).

Residues histidine 114 and histidine 118 each contribute to the Fe cation site. Substrate-binding positions include 136–140 (LVSGG), aspartate 169, glycine 182, aspartate 186, and asparagine 275. Residue aspartate 301 coordinates Fe cation.

It belongs to the KAE1 / TsaD family. It depends on Fe(2+) as a cofactor.

It localises to the cytoplasm. The catalysed reaction is L-threonylcarbamoyladenylate + adenosine(37) in tRNA = N(6)-L-threonylcarbamoyladenosine(37) in tRNA + AMP + H(+). Functionally, required for the formation of a threonylcarbamoyl group on adenosine at position 37 (t(6)A37) in tRNAs that read codons beginning with adenine. Is involved in the transfer of the threonylcarbamoyl moiety of threonylcarbamoyl-AMP (TC-AMP) to the N6 group of A37, together with TsaE and TsaB. TsaD likely plays a direct catalytic role in this reaction. In Streptococcus pneumoniae (strain Taiwan19F-14), this protein is tRNA N6-adenosine threonylcarbamoyltransferase.